Reading from the N-terminus, the 156-residue chain is Small ribosomal subunit protein uS7 (156 aa).

The protein belongs to the universal ribosomal protein uS7 family. As to quaternary structure, part of the 30S ribosomal subunit. Contacts proteins S9 and S11.

In terms of biological role, one of the primary rRNA binding proteins, it binds directly to 16S rRNA where it nucleates assembly of the head domain of the 30S subunit. Is located at the subunit interface close to the decoding center, probably blocks exit of the E-site tRNA. The protein is Small ribosomal subunit protein uS7 of Bacillus pumilus (strain SAFR-032).